The primary structure comprises 43 residues: Protein PsbN (43 aa).

Residues 5–25 form a helical membrane-spanning segment; the sequence is TVLSIFISSLLLGITIYSIYI.

This sequence belongs to the PsbN family.

It is found in the plastid. The protein resides in the chloroplast thylakoid membrane. May play a role in photosystem I and II biogenesis. In Gracilaria tenuistipitata var. liui (Red alga), this protein is Protein PsbN.